A 179-amino-acid chain; its full sequence is Small ribosomal subunit protein uS7 (179 aa).

This sequence belongs to the universal ribosomal protein uS7 family. In terms of assembly, part of the 30S ribosomal subunit. Contacts proteins S9 and S11. Cross-links to IF3 and the P and E site tRNAs.

Functionally, one of the primary rRNA binding proteins, it binds directly to 16S rRNA where it nucleates assembly of the head domain of the 30S subunit. Is located at the subunit interface close to the decoding center, where it has been shown to contact mRNA. Has been shown to contact tRNA in both the P and E sites; it probably blocks exit of the E site tRNA. Its function is as follows. Protein S7 is also a translational repressor protein; it regulates the expression of the str operon members to different degrees by binding to its mRNA. In Escherichia coli (strain K12), this protein is Small ribosomal subunit protein uS7 (rpsG).